The sequence spans 393 residues: DNA primase small subunit PriS (393 aa).

Residues Asp-100, Asp-102, and Asp-296 contribute to the active site.

Belongs to the eukaryotic-type primase small subunit family. As to quaternary structure, heterodimer of a small subunit (PriS) and a large subunit (PriL). Requires Mg(2+) as cofactor. It depends on Mn(2+) as a cofactor.

Functionally, catalytic subunit of DNA primase, an RNA polymerase that catalyzes the synthesis of short RNA molecules used as primers for DNA polymerase during DNA replication. The small subunit contains the primase catalytic core and has DNA synthesis activity on its own. Binding to the large subunit stabilizes and modulates the activity, increasing the rate of DNA synthesis while decreasing the length of the DNA fragments, and conferring RNA synthesis capability. The DNA polymerase activity may enable DNA primase to also catalyze primer extension after primer synthesis. May also play a role in DNA repair. This Natronomonas pharaonis (strain ATCC 35678 / DSM 2160 / CIP 103997 / JCM 8858 / NBRC 14720 / NCIMB 2260 / Gabara) (Halobacterium pharaonis) protein is DNA primase small subunit PriS.